Reading from the N-terminus, the 184-residue chain is GMP synthase [glutamine-hydrolyzing] subunit A (184 aa).

In terms of domain architecture, Glutamine amidotransferase type-1 spans Arg3–Asp184. The active-site Nucleophile is the Cys73. Catalysis depends on residues His161 and Glu163.

Heterodimer composed of a glutamine amidotransferase subunit (A) and a GMP-binding subunit (B).

It catalyses the reaction XMP + L-glutamine + ATP + H2O = GMP + L-glutamate + AMP + diphosphate + 2 H(+). The protein operates within purine metabolism; GMP biosynthesis; GMP from XMP (L-Gln route): step 1/1. Its function is as follows. Catalyzes the synthesis of GMP from XMP. In Natronomonas pharaonis (strain ATCC 35678 / DSM 2160 / CIP 103997 / JCM 8858 / NBRC 14720 / NCIMB 2260 / Gabara) (Halobacterium pharaonis), this protein is GMP synthase [glutamine-hydrolyzing] subunit A.